The sequence spans 257 residues: 5'-nucleotidase SurE (257 aa).

A divalent metal cation contacts are provided by D8, D9, S40, and N92.

The protein belongs to the SurE nucleotidase family. The cofactor is a divalent metal cation.

The protein resides in the cytoplasm. It carries out the reaction a ribonucleoside 5'-phosphate + H2O = a ribonucleoside + phosphate. In terms of biological role, nucleotidase that shows phosphatase activity on nucleoside 5'-monophosphates. This is 5'-nucleotidase SurE from Rhizobium rhizogenes (strain K84 / ATCC BAA-868) (Agrobacterium radiobacter).